The following is a 618-amino-acid chain: Proline--tRNA ligase (618 aa).

Belongs to the class-II aminoacyl-tRNA synthetase family. ProS type 1 subfamily. In terms of assembly, homodimer.

Its subcellular location is the cytoplasm. The enzyme catalyses tRNA(Pro) + L-proline + ATP = L-prolyl-tRNA(Pro) + AMP + diphosphate. In terms of biological role, catalyzes the attachment of proline to tRNA(Pro) in a two-step reaction: proline is first activated by ATP to form Pro-AMP and then transferred to the acceptor end of tRNA(Pro). As ProRS can inadvertently accommodate and process non-cognate amino acids such as alanine and cysteine, to avoid such errors it has two additional distinct editing activities against alanine. One activity is designated as 'pretransfer' editing and involves the tRNA(Pro)-independent hydrolysis of activated Ala-AMP. The other activity is designated 'posttransfer' editing and involves deacylation of mischarged Ala-tRNA(Pro). The misacylated Cys-tRNA(Pro) is not edited by ProRS. This is Proline--tRNA ligase from Streptococcus pyogenes serotype M4 (strain MGAS10750).